The primary structure comprises 312 residues: Pantothenate kinase (312 aa).

Position 97–104 (97–104 (GSVAVGKS)) interacts with ATP.

It belongs to the prokaryotic pantothenate kinase family.

The protein localises to the cytoplasm. The enzyme catalyses (R)-pantothenate + ATP = (R)-4'-phosphopantothenate + ADP + H(+). Its pathway is cofactor biosynthesis; coenzyme A biosynthesis; CoA from (R)-pantothenate: step 1/5. The sequence is that of Pantothenate kinase from Mycobacterium bovis (strain BCG / Pasteur 1173P2).